The sequence spans 416 residues: Lipoyl synthase, mitochondrial (416 aa).

A mitochondrion-targeting transit peptide spans 1 to 33 (MAAASTNRLRLLYTSTRASLPQSTPSILTTRTY). The interval 20 to 52 (LPQSTPSILTTRTYATTDSSTSATSTPKPRRRT) is disordered. Residues 29–46 (TTRTYATTDSSTSATSTP) are compositionally biased toward low complexity. 7 residues coordinate [4Fe-4S] cluster: cysteine 133, cysteine 138, cysteine 144, cysteine 164, cysteine 168, cysteine 171, and serine 379. A Radical SAM core domain is found at 147 to 368 (GGDKAAATAT…QRRAEELGFL (222 aa)).

It belongs to the radical SAM superfamily. Lipoyl synthase family. [4Fe-4S] cluster is required as a cofactor.

The protein localises to the mitochondrion. The enzyme catalyses [[Fe-S] cluster scaffold protein carrying a second [4Fe-4S](2+) cluster] + N(6)-octanoyl-L-lysyl-[protein] + 2 oxidized [2Fe-2S]-[ferredoxin] + 2 S-adenosyl-L-methionine + 4 H(+) = [[Fe-S] cluster scaffold protein] + N(6)-[(R)-dihydrolipoyl]-L-lysyl-[protein] + 4 Fe(3+) + 2 hydrogen sulfide + 2 5'-deoxyadenosine + 2 L-methionine + 2 reduced [2Fe-2S]-[ferredoxin]. It functions in the pathway protein modification; protein lipoylation via endogenous pathway; protein N(6)-(lipoyl)lysine from octanoyl-[acyl-carrier-protein]: step 2/2. Catalyzes the radical-mediated insertion of two sulfur atoms into the C-6 and C-8 positions of the octanoyl moiety bound to the lipoyl domains of lipoate-dependent enzymes, thereby converting the octanoylated domains into lipoylated derivatives. The sequence is that of Lipoyl synthase, mitochondrial from Aspergillus niger (strain ATCC MYA-4892 / CBS 513.88 / FGSC A1513).